The following is a 546-amino-acid chain: Protein HydE (546 aa).

The protein is Protein HydE (hydE) of Wolinella succinogenes (strain ATCC 29543 / DSM 1740 / CCUG 13145 / JCM 31913 / LMG 7466 / NCTC 11488 / FDC 602W) (Vibrio succinogenes).